The chain runs to 422 residues: Tryptophan synthase beta chain (422 aa).

The residue at position 87 (Lys87) is an N6-(pyridoxal phosphate)lysine.

The protein belongs to the TrpB family. In terms of assembly, tetramer of two alpha and two beta chains. Pyridoxal 5'-phosphate is required as a cofactor.

The enzyme catalyses (1S,2R)-1-C-(indol-3-yl)glycerol 3-phosphate + L-serine = D-glyceraldehyde 3-phosphate + L-tryptophan + H2O. Its pathway is amino-acid biosynthesis; L-tryptophan biosynthesis; L-tryptophan from chorismate: step 5/5. The beta subunit is responsible for the synthesis of L-tryptophan from indole and L-serine. This Haloferax volcanii (strain ATCC 29605 / DSM 3757 / JCM 8879 / NBRC 14742 / NCIMB 2012 / VKM B-1768 / DS2) (Halobacterium volcanii) protein is Tryptophan synthase beta chain (trpB).